A 381-amino-acid chain; its full sequence is V-type proton ATPase subunit C 1-B (381 aa).

Thr-2 carries the N-acetylthreonine modification.

Belongs to the V-ATPase C subunit family. V-ATPase is a heteromultimeric enzyme made up of two complexes: the ATP-hydrolytic V1 complex and the proton translocation V0 complex. The V1 complex consists of three catalytic AB heterodimers that form a heterohexamer, three peripheral stalks each consisting of EG heterodimers, one central rotor including subunits D and F, and the regulatory subunits C and H. The proton translocation complex V0 consists of the proton transport subunit a, a ring of proteolipid subunits c9c'', rotary subunit d, subunits e and f, and two accessory subunits.

Functionally, subunit of the V1 complex of vacuolar(H+)-ATPase (V-ATPase), a multisubunit enzyme composed of a peripheral complex (V1) that hydrolyzes ATP and a membrane integral complex (V0) that translocates protons. V-ATPase is responsible for acidifying and maintaining the pH of intracellular compartments and in some cell types, is targeted to the plasma membrane, where it is responsible for acidifying the extracellular environment. Subunit C is necessary for the assembly of the catalytic sector of the enzyme and is likely to have a specific function in its catalytic activity. The sequence is that of V-type proton ATPase subunit C 1-B (atp6v1c1b) from Danio rerio (Zebrafish).